We begin with the raw amino-acid sequence, 160 residues long: Cyclic pyranopterin monophosphate synthase (160 aa).

Residues 75 to 77 (LCH) and 113 to 114 (ME) each bind substrate. D128 is a catalytic residue.

It belongs to the MoaC family. Homohexamer; trimer of dimers.

It carries out the reaction (8S)-3',8-cyclo-7,8-dihydroguanosine 5'-triphosphate = cyclic pyranopterin phosphate + diphosphate. Its pathway is cofactor biosynthesis; molybdopterin biosynthesis. In terms of biological role, catalyzes the conversion of (8S)-3',8-cyclo-7,8-dihydroguanosine 5'-triphosphate to cyclic pyranopterin monophosphate (cPMP). This chain is Cyclic pyranopterin monophosphate synthase, found in Sodalis glossinidius (strain morsitans).